Here is a 600-residue protein sequence, read N- to C-terminus: Glutamine--fructose-6-phosphate aminotransferase [isomerizing] (600 aa).

Cys-2 (nucleophile; for GATase activity) is an active-site residue. Residues 2-217 (CGIVGFIGEQ…DKEIVIVTKE (216 aa)) form the Glutamine amidotransferase type-2 domain. SIS domains are found at residues 283–422 (IRNA…AKGE) and 452–590 (LAKQ…VDKP). Lys-595 functions as the For Fru-6P isomerization activity in the catalytic mechanism.

As to quaternary structure, homodimer.

It localises to the cytoplasm. The catalysed reaction is D-fructose 6-phosphate + L-glutamine = D-glucosamine 6-phosphate + L-glutamate. Functionally, catalyzes the first step in hexosamine metabolism, converting fructose-6P into glucosamine-6P using glutamine as a nitrogen source. The polypeptide is Glutamine--fructose-6-phosphate aminotransferase [isomerizing] (Bacillus cereus (strain ATCC 10987 / NRS 248)).